Here is a 275-residue protein sequence, read N- to C-terminus: tRNA pseudouridine synthase A (275 aa).

Aspartate 60 acts as the Nucleophile in catalysis. Tyrosine 119 provides a ligand contact to substrate.

The protein belongs to the tRNA pseudouridine synthase TruA family. As to quaternary structure, homodimer.

It catalyses the reaction uridine(38/39/40) in tRNA = pseudouridine(38/39/40) in tRNA. Formation of pseudouridine at positions 38, 39 and 40 in the anticodon stem and loop of transfer RNAs. The protein is tRNA pseudouridine synthase A of Synechocystis sp. (strain ATCC 27184 / PCC 6803 / Kazusa).